The sequence spans 192 residues: Riboflavin kinase (192 aa).

The Mg(2+) site is built by T47 and N49. The Nucleophile role is filled by E129.

Belongs to the flavokinase family. Requires Zn(2+) as cofactor. It depends on Mg(2+) as a cofactor.

It catalyses the reaction riboflavin + ATP = FMN + ADP + H(+). Its pathway is cofactor biosynthesis; FMN biosynthesis; FMN from riboflavin (ATP route): step 1/1. Catalyzes the phosphorylation of riboflavin (vitamin B2) to form flavin mononucleotide (FMN) coenzyme. The protein is Riboflavin kinase (FMN1) of Yarrowia lipolytica (strain CLIB 122 / E 150) (Yeast).